The primary structure comprises 406 residues: DNA-binding transcriptional repressor Mlc (406 aa).

A DNA-binding region (H-T-H motif) is located at residues R33–L42. Residues H247, C257, C259, and C264 each coordinate Zn(2+).

It belongs to the ROK (NagC/XylR) family. Homodimer. Homotetramer. There is probably an equilibrium between the dimeric and the tetrameric form. Interacts with dephosphorylated PtsG. Mlc and PtsG EIIB domain form a complex with the 1:1 stoichiometry. Interacts with MtfA.

It is found in the cytoplasm. Activity is modulated by glucose. In the presence of glucose, is inhibited by interaction with the dephosphorylated form of PtsG, which sequesters Mlc in the inner membrane and prevents Mlc binding to its target promoters. The restriction of conformational freedom resulting from the anchoring of four ends of Mlc to the membrane could be the primary cause of its loss of DNA-binding activity in vivo. Activity is also inhibited by interaction with the Mlc titration factor A (mtfA). The inactivation mechanisms of Mlc by dephosphorylated PtsG and MtfA differ significantly. In terms of biological role, global regulator of carbohydrate metabolism. Represses the expression of several genes involved in sugar transport and utilization, in particular phosphoenolpyruvate-carbohydrate phosphotransferase system (PTS) genes. Represses expression of ptsG (EIICB(Glc)), which encodes the PTS system glucose-specific EIICB component. Also represses the expression of the manXYZ operon, encoding the mannose-specific PTS system, expression of malT, encoding the transcriptional activator of the maltose regulon, and expression of the pts operon, composed of the genes ptsH, ptsI and crr. Represses its own expression. Acts by binding to the regulatory region of the target genes. The chain is DNA-binding transcriptional repressor Mlc from Escherichia coli (strain K12).